A 65-amino-acid polypeptide reads, in one-letter code: Photosystem II reaction center protein J (65 aa).

A helical transmembrane segment spans residues 35 to 55 (LWLVATAGGIAVIFVLGIFFY).

Belongs to the PsbJ family. PSII is composed of 1 copy each of membrane proteins PsbA, PsbB, PsbC, PsbD, PsbE, PsbF, PsbH, PsbI, PsbJ, PsbK, PsbL, PsbM, PsbT, PsbX, PsbY, Psb30/Ycf12, peripheral proteins PsbO, CyanoQ (PsbQ), PsbU, PsbV and a large number of cofactors. It forms dimeric complexes.

It is found in the cellular thylakoid membrane. Its function is as follows. One of the components of the core complex of photosystem II (PSII). PSII is a light-driven water:plastoquinone oxidoreductase that uses light energy to abstract electrons from H(2)O, generating O(2) and a proton gradient subsequently used for ATP formation. It consists of a core antenna complex that captures photons, and an electron transfer chain that converts photonic excitation into a charge separation. The sequence is that of Photosystem II reaction center protein J from Prochlorococcus marinus (strain MIT 9312).